A 595-amino-acid polypeptide reads, in one-letter code: Probable Xaa-Pro aminopeptidase CHGG_02942 (595 aa).

The disordered stretch occupies residues 51-76 (KSGPSSSNLSPSTLSTEKTSSDSSGV). Over residues 52–66 (SGPSSSNLSPSTLST) the composition is skewed to low complexity. Mn(2+) is bound by residues Asp334, Asp345, Glu541, and Glu563.

It belongs to the peptidase M24B family. Requires Mn(2+) as cofactor.

The enzyme catalyses Release of any N-terminal amino acid, including proline, that is linked to proline, even from a dipeptide or tripeptide.. In terms of biological role, catalyzes the removal of a penultimate prolyl residue from the N-termini of peptides. This Chaetomium globosum (strain ATCC 6205 / CBS 148.51 / DSM 1962 / NBRC 6347 / NRRL 1970) (Soil fungus) protein is Probable Xaa-Pro aminopeptidase CHGG_02942.